Here is a 325-residue protein sequence, read N- to C-terminus: Alkanal monooxygenase beta chain (325 aa).

It belongs to the bacterial luciferase oxidoreductase family. Heterodimer of an alpha and a beta chain.

The catalysed reaction is a long-chain fatty aldehyde + FMNH2 + O2 = a long-chain fatty acid + hnu + FMN + H2O + 2 H(+). In terms of biological role, light-emitting reaction in luminous bacteria. The specific role of the beta subunit is unknown, but it is absolutely required for bioluminescence activity. This is Alkanal monooxygenase beta chain (luxB) from Photobacterium leiognathi.